Here is a 594-residue protein sequence, read N- to C-terminus: Laccase-2 (594 aa).

The signal sequence occupies residues 1–20 (MGGIIKLSFLFCSLISLVNS). A glycan (N-linked (GlcNAc...) asparagine) is linked at Asn-67. Plastocyanin-like domains lie at 70 to 183 (EALA…HSPN) and 195 to 357 (DRIV…RYTG). Cu cation-binding residues include His-117 and His-119. Residue Asn-124 is glycosylated (N-linked (GlcNAc...) asparagine). A disulfide bridge links Cys-138 with Cys-578. Cu cation is bound by residues His-162 and His-164. N-linked (GlcNAc...) asparagine glycosylation is found at Asn-242, Asn-286, Asn-320, Asn-358, Asn-397, Asn-430, Asn-452, and Asn-458. The 98-residue stretch at 466 to 563 (PVNIIINNLD…KMAVVVVQPE (98 aa)) folds into the Plastocyanin-like 3 domain. Cu cation is bound by residues His-480, His-483, and His-485. Asn-508 is a glycosylation site (N-linked (GlcNAc...) asparagine). Cu cation is bound by residues His-543, Cys-544, His-545, and His-549.

Belongs to the multicopper oxidase family. It depends on Cu cation as a cofactor.

The protein localises to the secreted. The protein resides in the cell wall. The catalysed reaction is 4 hydroquinone + O2 = 4 benzosemiquinone + 2 H2O. In terms of biological role, laccase that catalyzes the oxidation of certain aromatic compounds, including L-dopa, to quinones, which then polymerize to melanin. Able to oxidize a wide variety of aromatic diphenol and diamino groups in the ortho, meta, and para positions but not monophenolic groups such as in phenol, tyramine, or tyrosine. Plays an important role in virulence. Plays a role in dissemination to extrapulmonary sites but is not involved in pulmonary growth or in elicitation of cellular immune responses in the lung. The chain is Laccase-2 (LAC2) from Cryptococcus neoformans var. grubii serotype A (strain H99 / ATCC 208821 / CBS 10515 / FGSC 9487) (Filobasidiella neoformans var. grubii).